The chain runs to 151 residues: Ubiquitin-conjugating enzyme E2 2 (151 aa).

Residues 1–26 (MSTSARRRLMRDFKRMQTDPPAGVSA) form a disordered region. Positions 4–150 (SARRRLMRDF…VRETVEKSWE (147 aa)) constitute a UBC core domain. Catalysis depends on Cys88, which acts as the Glycyl thioester intermediate.

This sequence belongs to the ubiquitin-conjugating enzyme family.

The protein localises to the cytoplasm. The protein resides in the nucleus. It carries out the reaction S-ubiquitinyl-[E1 ubiquitin-activating enzyme]-L-cysteine + [E2 ubiquitin-conjugating enzyme]-L-cysteine = [E1 ubiquitin-activating enzyme]-L-cysteine + S-ubiquitinyl-[E2 ubiquitin-conjugating enzyme]-L-cysteine.. The protein operates within protein modification; protein ubiquitination. Functionally, catalyzes the covalent attachment of ubiquitin to other proteins. Plays a role in transcription regulation by catalyzing the monoubiquitination of histone H2B to form H2BK123ub1. H2BK123ub1 gives a specific tag for epigenetic transcriptional activation and is also a prerequisite for H3K4me and H3K79me formation. Also involved in postreplication repair of UV-damaged DNA, in N-end rule-dependent protein degradation and in sporulation. In Aspergillus fumigatus (strain ATCC MYA-4609 / CBS 101355 / FGSC A1100 / Af293) (Neosartorya fumigata), this protein is Ubiquitin-conjugating enzyme E2 2 (ubc2).